Reading from the N-terminus, the 471-residue chain is U1 small nuclear ribonucleoprotein 70 kDa (471 aa).

The disordered stretch occupies residues 48 to 78; the sequence is FEDPRDAPPPTRAETREERMERKRREKIERR. Positions 60–78 are enriched in basic and acidic residues; sequence AETREERMERKRREKIERR. The segment at 92–202 is required for interaction with U1 RNA; the sequence is HNDQNAQGDA…GGGLGGTRRG (111 aa). An RRM domain is found at 103-184; the sequence is KTLFVARVNY…LVDVERGRTV (82 aa). Positions 187–471 are disordered; sequence WRPRRLGGGL…NGYMMEPPME (285 aa). Positions 192-201 are enriched in gly residues; the sequence is LGGGLGGTRR. Positions 207–245 are enriched in basic and acidic residues; the sequence is NIRHSGRDDTSRYDERDRDRERERDRRERSRERDKERER. The segment covering 246 to 259 has biased composition (basic residues); the sequence is RRSRSRERRRRSRS. The segment covering 260–293 has biased composition (basic and acidic residues); sequence REKEERKRSRERSRDKDKDKDKDKDKEKDKDKDR. The segment covering 294–303 has biased composition (basic residues); that stretch reads DRKRRSRSRE. 2 stretches are compositionally biased toward basic and acidic residues: residues 304–321 and 344–428; these read RKRE…RVEG and IELK…ERVP.

As to quaternary structure, component of the U1 snRNP. The U1 snRNP is composed of the U1 snRNA and the 7 core Sm proteins snrpb, snrpd1, snrpd2, snrpd3, snrpe, snrpf and snrpg that assemble in a heptameric protein ring on the Sm site of the small nuclear RNA to form the core snRNP, and at least three U1 snRNP-specific proteins snrnp70/U1-70K, snrpa/U1-A and snrpc/U1-C.

It is found in the nucleus speckle. The protein resides in the nucleus. It localises to the nucleoplasm. Functionally, component of the spliceosomal U1 snRNP, which is essential for recognition of the pre-mRNA 5' splice-site and the subsequent assembly of the spliceosome. snrnp70 binds to the loop I region of U1-snRNA. The chain is U1 small nuclear ribonucleoprotein 70 kDa (snrnp70) from Xenopus tropicalis (Western clawed frog).